The chain runs to 1344 residues: DEAD-box ATP-dependent RNA helicase FANCM (1344 aa).

Positions 39–61 are disordered; it reads SSSHFTPLANPPITANLTKPPAK. The 169-residue stretch at 124-292 folds into the Helicase ATP-binding domain; it reads ITKTALFSNT…GIIDNLQIST (169 aa). 137-144 contacts ATP; that stretch reads LPTGLGKT. Residues 240 to 243 carry the DEAH box motif; that stretch reads DEAH. Residues 450-621 form the Helicase C-terminal domain; sequence KLSKMLEILV…SFNFHPSPRM (172 aa). Disordered regions lie at residues 765–790, 1110–1148, 1183–1218, and 1307–1344; these read VNTS…KDYE, EVSS…TQAE, YSAG…SNQD, and KQRS…LGLW. Positions 1118–1135 are enriched in acidic residues; sequence SADENEDVTGDSFEDSFI. Residues 1207–1218 show a composition bias toward polar residues; that stretch reads TPKTTNSESNQD. Residues 1308–1318 are compositionally biased toward basic and acidic residues; sequence QRSEAKEKEDA.

Belongs to the DEAD box helicase family. DEAH subfamily. FANCM sub-subfamily.

The protein localises to the nucleus. The catalysed reaction is ATP + H2O = ADP + phosphate + H(+). In terms of biological role, involved in ordered homologous recombination (HR) events in somatic and meiotic cells. Involved in the suppression of spontaneous HR events in somatic cells. Has an opposite function to the DNA binding cofactor MHF1 which promotes spontaneous HR. Functions in replicative repair independently of MHF1 and in a parallel pathway to the endonuclease MUS81. Acts in the same pathway as the two DNA-binding cofactors MHF1 and MHF2 to restrain class II meiotic crossover (CO), and acts exclusively with MHF1 and MHF2 during meiosis to repair DNA interstrand cross-links (ICLs). This common pathway is in parallel to the pathway that involves the RECQ4A helicase. Seems to be involved in the stabilization of recombination intermediates. Involved in DNA double-strand break (DSB) repair during meiosis. Required for synthesis-dependent strand annealing (SDSA) and to a lesser extent for single-strand annealing (SSA). May process meiotic DSB repair intermediates, possibly D-loops, driving them toward noncrossover (NCO) resolution. This is DEAD-box ATP-dependent RNA helicase FANCM from Arabidopsis thaliana (Mouse-ear cress).